Consider the following 88-residue polypeptide: MISKEQKLALIKEFGGSEKNTGLAEVQIAILTAEISNMTEHLKMHKKDIPTRRSLLKKVAQRRHFLDYLVKKDVNRYKEIIEKLGIRK.

Belongs to the universal ribosomal protein uS15 family. Part of the 30S ribosomal subunit. Forms a bridge to the 50S subunit in the 70S ribosome, contacting the 23S rRNA.

In terms of biological role, one of the primary rRNA binding proteins, it binds directly to 16S rRNA where it helps nucleate assembly of the platform of the 30S subunit by binding and bridging several RNA helices of the 16S rRNA. Functionally, forms an intersubunit bridge (bridge B4) with the 23S rRNA of the 50S subunit in the ribosome. This chain is Small ribosomal subunit protein uS15, found in Mycoplasma capricolum subsp. capricolum (strain California kid / ATCC 27343 / NCTC 10154).